The sequence spans 138 residues: Small ribosomal subunit protein uS11c (138 aa).

The interval 1–22 (MAKAIPKISSRRNGRIGSRKGA) is disordered. A compositionally biased stretch (basic residues) spans 9–22 (SSRRNGRIGSRKGA).

This sequence belongs to the universal ribosomal protein uS11 family. In terms of assembly, part of the 30S ribosomal subunit.

The protein localises to the plastid. The protein resides in the chloroplast. The sequence is that of Small ribosomal subunit protein uS11c from Nicotiana tomentosiformis (Tobacco).